Consider the following 262-residue polypeptide: Global transcriptional regulator CodY (262 aa).

Residues M1 to L159 are GAF domain. Positions A207–R226 form a DNA-binding region, H-T-H motif.

Belongs to the CodY family.

The protein localises to the cytoplasm. DNA-binding global transcriptional regulator which is involved in the adaptive response to starvation and acts by directly or indirectly controlling the expression of numerous genes in response to nutrient availability. During rapid exponential growth, CodY is highly active and represses genes whose products allow adaptation to nutrient depletion. This is Global transcriptional regulator CodY from Streptococcus pneumoniae serotype 4 (strain ATCC BAA-334 / TIGR4).